Here is a 268-residue protein sequence, read N- to C-terminus: Tryptophan synthase alpha chain (268 aa).

Catalysis depends on proton acceptor residues glutamate 49 and aspartate 60.

Belongs to the TrpA family. In terms of assembly, tetramer of two alpha and two beta chains.

It catalyses the reaction (1S,2R)-1-C-(indol-3-yl)glycerol 3-phosphate + L-serine = D-glyceraldehyde 3-phosphate + L-tryptophan + H2O. Its pathway is amino-acid biosynthesis; L-tryptophan biosynthesis; L-tryptophan from chorismate: step 5/5. Functionally, the alpha subunit is responsible for the aldol cleavage of indoleglycerol phosphate to indole and glyceraldehyde 3-phosphate. This is Tryptophan synthase alpha chain from Escherichia coli (strain SE11).